Consider the following 359-residue polypeptide: 3-dehydroquinate synthase (359 aa).

NAD(+) is bound by residues 71 to 76, 105 to 109, 129 to 130, K142, K151, and 169 to 172; these read DGEQYK, GVIGD, TT, and CLST. Residues E184, H247, and H264 each coordinate Zn(2+).

This sequence belongs to the sugar phosphate cyclases superfamily. Dehydroquinate synthase family. Co(2+) is required as a cofactor. It depends on Zn(2+) as a cofactor. NAD(+) serves as cofactor.

Its subcellular location is the cytoplasm. The catalysed reaction is 7-phospho-2-dehydro-3-deoxy-D-arabino-heptonate = 3-dehydroquinate + phosphate. It functions in the pathway metabolic intermediate biosynthesis; chorismate biosynthesis; chorismate from D-erythrose 4-phosphate and phosphoenolpyruvate: step 2/7. Its function is as follows. Catalyzes the conversion of 3-deoxy-D-arabino-heptulosonate 7-phosphate (DAHP) to dehydroquinate (DHQ). In Shewanella piezotolerans (strain WP3 / JCM 13877), this protein is 3-dehydroquinate synthase.